Reading from the N-terminus, the 349-residue chain is Protein Wnt-7b (349 aa).

A signal peptide spans 1-24; it reads MHRNFRKWIFYVFLCFGVLYVKLG. 5 disulfide bridges follow: cysteine 73/cysteine 84, cysteine 123/cysteine 131, cysteine 133/cysteine 152, cysteine 200/cysteine 214, and cysteine 202/cysteine 209. 2 N-linked (GlcNAc...) asparagine glycosylation sites follow: asparagine 83 and asparagine 127. Serine 206 carries O-palmitoleoyl serine; by PORCN lipidation. The segment at 238 to 266 is disordered linker; that stretch reads VEVVRASRLRQPTFLRIKQLRSYQKPMET. Cystine bridges form between cysteine 278-cysteine 309, cysteine 294-cysteine 304, cysteine 308-cysteine 348, cysteine 324-cysteine 339, cysteine 326-cysteine 336, and cysteine 331-cysteine 332. Asparagine 295 carries N-linked (GlcNAc...) asparagine glycosylation.

The protein belongs to the Wnt family. In terms of assembly, forms a soluble 1:1 complex with AFM; this prevents oligomerization and is required for prolonged biological activity. The complex with AFM may represent the physiological form in body fluids. Interacts with FZD1 and FZD10. Interacts with FZD4 (in vitro). Interacts with PORCN. Interacts with glypican GPC3. Interacts (via intrinsically disordered linker region) with RECK; interaction with RECK confers ligand selectivity for Wnt7 in brain endothelial cells and allows these cells to selectively respond to Wnt7. In terms of processing, palmitoleoylation is required for efficient binding to frizzled receptors. Depalmitoleoylation leads to Wnt signaling pathway inhibition. As to expression, moderately expressed in fetal brain, weakly expressed in fetal lung and kidney, and faintly expressed in adult brain, lung and prostate.

The protein localises to the secreted. The protein resides in the extracellular space. Its subcellular location is the extracellular matrix. In terms of biological role, ligand for members of the frizzled family of seven transmembrane receptors that functions in the canonical Wnt/beta-catenin signaling pathway. Required for normal fusion of the chorion and the allantois during placenta development. Required for central nervous system (CNS) angiogenesis and blood-brain barrier regulation. This is Protein Wnt-7b (WNT7B) from Homo sapiens (Human).